The chain runs to 185 residues: MAKSAYEPRLKKEYVERIRKAIQEQFSYANEMQIPRLDKIVINMGVGEATGDSKKPTVAAADLAAIAGQKPVITRARNSIAGFKLREGMPIGAKVTLRGVRMYEFLDRLINIALPRVRDFRGLNPKSFDGRGNFAMGIKEHIVFPEINYDKVDQMWGMDIIVCTTATNDDEARALLKEFNFPFRQ.

Belongs to the universal ribosomal protein uL5 family. As to quaternary structure, part of the 50S ribosomal subunit; part of the 5S rRNA/L5/L18/L25 subcomplex. Contacts the 5S rRNA and the P site tRNA. Forms a bridge to the 30S subunit in the 70S ribosome.

Its function is as follows. This is one of the proteins that bind and probably mediate the attachment of the 5S RNA into the large ribosomal subunit, where it forms part of the central protuberance. In the 70S ribosome it contacts protein S13 of the 30S subunit (bridge B1b), connecting the 2 subunits; this bridge is implicated in subunit movement. Contacts the P site tRNA; the 5S rRNA and some of its associated proteins might help stabilize positioning of ribosome-bound tRNAs. The protein is Large ribosomal subunit protein uL5 of Sinorhizobium medicae (strain WSM419) (Ensifer medicae).